The sequence spans 1719 residues: 5'-3' exoribonuclease 1 (1719 aa).

Basic and acidic residues predominate over residues His1268–Lys1298. A disordered region spans residues His1268–Arg1317. Residues Cys1301 to Gly1314 show a composition bias toward polar residues. At Ser1382 the chain carries Phosphoserine. The segment covering Ile1397–Val1430 has biased composition (basic and acidic residues). Disordered regions lie at residues Ile1397–Gly1445 and Glu1634–Glu1719. The span at Ala1638–Thr1660 shows a compositional bias: polar residues. The span at Pro1661–Ser1680 shows a compositional bias: low complexity. The span at His1681–Val1690 shows a compositional bias: polar residues.

It belongs to the 5'-3' exonuclease family. Found in a mRNP complex with UPF1, UPF2, UPF3B and XRN1. Associates with alpha and beta tubulins. Interacts with DIS3L2. Interacts with ZC3HAV1 in an RNA-dependent manner. Interacts with ZFP36L1. Interacts with TRIM71 (via NHL repeats) in an RNA-dependent manner. Interacts with YTHDC2 (via ANK repeats). Interacts with DHX34; the interaction is RNA-independent. Expressed in heart, brain (spinal cord, dorsal root and superior cervical ganglia, neurons of the cerebrum and brain stem), peripheral nerve fibers in the skin and intestine, spleen, lung, liver, skeletal muscle, kidney and testis.

Its subcellular location is the cytoplasm. Its function is as follows. Major 5'-3' exoribonuclease involved in mRNA decay. Required for the 5'-3'-processing of the G4 tetraplex-containing DNA and RNA substrates. The kinetic of hydrolysis is faster for G4 RNA tetraplex than for G4 DNA tetraplex and monomeric RNA tetraplex. Binds to RNA and DNA. Plays a role in replication-dependent histone mRNA degradation. This chain is 5'-3' exoribonuclease 1, found in Mus musculus (Mouse).